Reading from the N-terminus, the 1481-residue chain is Neuropathy target esterase sws (1481 aa).

Topologically, residues 1–34 (MDVLELLRASANGCYNTIFSDAWSQYVSQQITSS) are lumenal. A helical transmembrane segment spans residues 35–55 (LYLYIALGILTVLFVAWFIYF). Topologically, residues 56 to 1481 (KRLARLRLRD…KENKNVNTKN (1426 aa)) are cytoplasmic. 175 to 302 (IFGHFEKPVF…IRVIQVIMIR (128 aa)) serves as a coordination point for a nucleoside 3',5'-cyclic phosphate. The tract at residues 336-420 (HLNSQSQSSQ…NNVQLPEVHG (85 aa)) is disordered. Composition is skewed to low complexity over residues 339–379 (SQSQ…LPLQ) and 401–412 (SGPNPNPNSGNN). Ser448 bears the Phosphoserine mark. A nucleoside 3',5'-cyclic phosphate contacts are provided by residues 492-624 (ELGL…VVRR) and 613-740 (IVLD…LSHR). The region spanning 967–1133 (LVLGGGGARG…VNNLPGHLWR (167 aa)) is the PNPLA domain. A GXGXXG motif is present at residues 971 to 976 (GGGARG). A GXSXG motif is present at residues 998–1002 (GVSIG). Catalysis depends on Ser1000, which acts as the Nucleophile. Asp1120 functions as the Proton acceptor in the catalytic mechanism. Residues 1120 to 1122 (DGG) carry the DGA/G motif. Ser1214 bears the Phosphoserine mark. A disordered region spans residues 1366 to 1481 (LSLSEAEMDS…KENKNVNTKN (116 aa)). Composition is skewed to basic and acidic residues over residues 1379-1390 (IDFRSDSKKDKA) and 1400-1410 (KDNEDKTDAVD). Low complexity predominate over residues 1445–1457 (TNTMTTQTTSPTT).

It belongs to the NTE family. As to quaternary structure, interacts with Pka-C3; interaction inhibits the catalytic function of Pka-C3 and the esterase activity of sws.

It is found in the endoplasmic reticulum membrane. The enzyme catalyses a 1-acyl-sn-glycero-3-phosphocholine + H2O = sn-glycerol 3-phosphocholine + a fatty acid + H(+). Its function is as follows. Phospholipase B that deacylates intracellular phosphatidylcholine (PtdCho), generating glycerophosphocholine (GroPtdCho). This deacylation occurs at both sn-2 and sn-1 positions of PtdCho. Its specific chemical modification by certain organophosphorus (OP) compounds leads to distal axonopathy. Plays a role in the signaling mechanism between neurons and glia that regulates glia wrapping during development of the adult brain. Essential for membrane lipid homeostasis and cell survival in both neurons and glia of the adult brain. The protein is Neuropathy target esterase sws of Drosophila willistoni (Fruit fly).